The primary structure comprises 649 residues: V-type ATP synthase subunit I (649 aa).

Helical transmembrane passes span 312-332 (FFSF…GLVF), 360-380 (FMIL…FFGV), 453-473 (FIDN…LSLG), 485-505 (IGWV…LQAV), 520-540 (GLVG…GGVI), 556-576 (VFSD…GAMV), and 593-613 (ILII…GGVI).

It belongs to the V-ATPase 116 kDa subunit family.

The protein resides in the cell membrane. Produces ATP from ADP in the presence of a proton gradient across the membrane. The polypeptide is V-type ATP synthase subunit I (atpI) (Chlamydia trachomatis serovar D (strain ATCC VR-885 / DSM 19411 / UW-3/Cx)).